We begin with the raw amino-acid sequence, 249 residues long: Secreted flagellin C (249 aa).

The secreted form is about 1 kDa larger than the whole cell lysate form, presumably due to post-translational modification. A 22 kDa form is also found in the secreted fraction, probably resulting from proteolysis.

The protein localises to the secreted. It is found in the host cell surface. In terms of biological role, plays a role in virulence. The chain is Secreted flagellin C (flaC) from Campylobacter jejuni subsp. jejuni serotype O:2 (strain ATCC 700819 / NCTC 11168).